A 546-amino-acid chain; its full sequence is Elongator complex protein 3 (546 aa).

The Radical SAM core domain maps to 81–371 (RTASGIAVVA…YRVQRDIPMP (291 aa)). Positions 98, 108, and 111 each coordinate [4Fe-4S] cluster. Acetyl-CoA is bound by residues Lys163, 473 to 476 (ELHV), 496 to 498 (FGM), and Tyr529. The region spanning 395 to 546 (TQCRDVRTRE…EGPYMVKRLQ (152 aa)) is the N-acetyltransferase domain.

It belongs to the ELP3 family. Component of the elongator complex. [4Fe-4S] cluster is required as a cofactor.

It localises to the cytoplasm. The protein resides in the nucleus. The catalysed reaction is uridine(34) in tRNA + acetyl-CoA + S-adenosyl-L-methionine + H2O = 5-(carboxymethyl)uridine(34) in tRNA + 5'-deoxyadenosine + L-methionine + CoA + 2 H(+). It participates in tRNA modification; 5-methoxycarbonylmethyl-2-thiouridine-tRNA biosynthesis. Functionally, catalytic tRNA acetyltransferase subunit of the elongator complex which is required for multiple tRNA modifications, including mcm5U (5-methoxycarbonylmethyl uridine), mcm5s2U (5-methoxycarbonylmethyl-2-thiouridine), and ncm5U (5-carbamoylmethyl uridine). In the elongator complex, acts as a tRNA uridine(34) acetyltransferase by mediating formation of carboxymethyluridine in the wobble base at position 34 in tRNAs. The polypeptide is Elongator complex protein 3 (Gallus gallus (Chicken)).